The sequence spans 504 residues: NADH-quinone oxidoreductase subunit N (504 aa).

14 helical membrane passes run 9–29 (IALLPIIVIGITIVGIMLSII), 38–58 (AVLTIIGMIIASVSSLLHMMW), 78–98 (VLYVILIMFVGIASSILGYVW), 114–134 (LLIASIGGILLVITNHLIVLF), 135–155 (LGIELISISICGLISYPVFSK), 164–184 (YIILSGVSSSFLLFGIVFIYC), 216–236 (IVIGLSMMMIGMGFKLSCVPF), 254–274 (YLATGSKIAVTAVLMRFLLIL), 282–302 (LHIFLSVSACCSMLFGSLMAI), 309–329 (RMLAYSSITNAGYLLIALIAL), 341–361 (ISVYLVSYLFANVGVWGIVNI), 392–412 (VIFVIAILSLAGIPMTFGFIG), 425–447 (LWFLTVMMIISSIISMFYYLKII), and 476–496 (FMVIIVAIIILFFGVYPQFIV).

It belongs to the complex I subunit 2 family. In terms of assembly, NDH-1 is composed of 13 different subunits. Subunits NuoA, H, J, K, L, M, N constitute the membrane sector of the complex.

It is found in the cell inner membrane. The enzyme catalyses a quinone + NADH + 5 H(+)(in) = a quinol + NAD(+) + 4 H(+)(out). In terms of biological role, NDH-1 shuttles electrons from NADH, via FMN and iron-sulfur (Fe-S) centers, to quinones in the respiratory chain. The immediate electron acceptor for the enzyme in this species is believed to be ubiquinone. Couples the redox reaction to proton translocation (for every two electrons transferred, four hydrogen ions are translocated across the cytoplasmic membrane), and thus conserves the redox energy in a proton gradient. This is NADH-quinone oxidoreductase subunit N from Blochmanniella floridana.